Here is a 433-residue protein sequence, read N- to C-terminus: Phosphomethylpyrimidine synthase 2 (433 aa).

Substrate-binding positions include N66, M94, Y123, H162, S184–G186, D225–R228, and E264. A Zn(2+)-binding site is contributed by H268. Residue Y291 coordinates substrate. H332 is a Zn(2+) binding site. C408, C411, and C415 together coordinate [4Fe-4S] cluster.

It belongs to the ThiC family. It depends on [4Fe-4S] cluster as a cofactor.

The enzyme catalyses 5-amino-1-(5-phospho-beta-D-ribosyl)imidazole + S-adenosyl-L-methionine = 4-amino-2-methyl-5-(phosphooxymethyl)pyrimidine + CO + 5'-deoxyadenosine + formate + L-methionine + 3 H(+). It participates in cofactor biosynthesis; thiamine diphosphate biosynthesis. Its function is as follows. Catalyzes the synthesis of the hydroxymethylpyrimidine phosphate (HMP-P) moiety of thiamine from aminoimidazole ribotide (AIR) in a radical S-adenosyl-L-methionine (SAM)-dependent reaction. This chain is Phosphomethylpyrimidine synthase 2, found in Saccharolobus solfataricus (strain ATCC 35092 / DSM 1617 / JCM 11322 / P2) (Sulfolobus solfataricus).